A 428-amino-acid chain; its full sequence is Phosphoribosylamine--glycine ligase (428 aa).

The ATP-grasp domain occupies 107–313 (KQVMKTYNIP…LVNVIESLLD (207 aa)). Position 133 to 194 (133 to 194 (VEAEGVPIVI…EEYLEGEELS (62 aa))) interacts with ATP. Mg(2+) contacts are provided by Glu-283 and Asn-285.

It belongs to the GARS family. Mg(2+) is required as a cofactor. Mn(2+) serves as cofactor.

The enzyme catalyses 5-phospho-beta-D-ribosylamine + glycine + ATP = N(1)-(5-phospho-beta-D-ribosyl)glycinamide + ADP + phosphate + H(+). It functions in the pathway purine metabolism; IMP biosynthesis via de novo pathway; N(1)-(5-phospho-D-ribosyl)glycinamide from 5-phospho-alpha-D-ribose 1-diphosphate: step 2/2. This is Phosphoribosylamine--glycine ligase from Halalkalibacterium halodurans (strain ATCC BAA-125 / DSM 18197 / FERM 7344 / JCM 9153 / C-125) (Bacillus halodurans).